Consider the following 381-residue polypeptide: Cytosolic acyl coenzyme A thioester hydrolase (381 aa).

The region spanning 51–169 is the HotDog ACOT-type 1 domain; the sequence is PGHCIAMGRI…TLWYVPLSLK (119 aa). Asparagine 67 is an active-site residue. Residues lysine 169 and lysine 199 each carry the N6-acetyllysine modification. One can recognise a HotDog ACOT-type 2 domain in the interval 225–339; the sequence is SYSQSSLIHL…FFTYVSLNQE (115 aa). The active site involves aspartate 256. Residue lysine 284 is modified to N6-acetyllysine. The interval 343–381 is disordered; sequence LPVPQLVPETEDEKKRFEEGKGRYLQMKAKRQGHTEPQP. Basic and acidic residues predominate over residues 354–364; the sequence is DEKKRFEEGKG.

Homohexamer. In terms of processing, the N-terminus is blocked. Isoform 1 is expressed constitutively in brain and testis. Isoform 2 is induced in liver by treatment with the peroxisome proliferator.

The protein localises to the cytoplasm. Its subcellular location is the cytosol. The enzyme catalyses hexadecanoyl-CoA + H2O = hexadecanoate + CoA + H(+). It carries out the reaction dodecanoyl-CoA + H2O = dodecanoate + CoA + H(+). It catalyses the reaction tetradecanoyl-CoA + H2O = tetradecanoate + CoA + H(+). The catalysed reaction is decanoyl-CoA + H2O = decanoate + CoA + H(+). The enzyme catalyses octanoyl-CoA + H2O = octanoate + CoA + H(+). It carries out the reaction octadecanoyl-CoA + H2O = octadecanoate + CoA + H(+). It catalyses the reaction (9Z)-octadecenoyl-CoA + H2O = (9Z)-octadecenoate + CoA + H(+). The protein operates within lipid metabolism; fatty acid metabolism. In terms of biological role, catalyzes the hydrolysis of acyl-CoAs into free fatty acids and coenzyme A (CoASH), regulating their respective intracellular levels. Preferentially hydrolyzes palmitoyl-CoA, but has a broad specificity acting on other fatty acyl-CoAs with chain-lengths of C8-C18. May play an important physiological function in brain. This Rattus norvegicus (Rat) protein is Cytosolic acyl coenzyme A thioester hydrolase (Acot7).